Here is a 334-residue protein sequence, read N- to C-terminus: Catabolite repressor/activator (334 aa).

In terms of domain architecture, HTH lacI-type spans 1–58 (MKLDEIARLAGVSRTTASYVINGKAKQYRVSDKTVEKVMAVVREHNYHPNAVAAGLRA). The H-T-H motif DNA-binding region spans 3–22 (LDEIARLAGVSRTTASYVIN).

As to quaternary structure, homotetramer.

In terms of biological role, global transcriptional regulator, which plays an important role in the regulation of carbon metabolism. The sequence is that of Catabolite repressor/activator (cra) from Salmonella typhimurium (strain LT2 / SGSC1412 / ATCC 700720).